We begin with the raw amino-acid sequence, 337 residues long: 5-formaminoimidazole-4-carboxamide-1-(beta)-D-ribofuranosyl 5'-monophosphate synthetase (337 aa).

Residues H23 and S87 each contribute to the 5-amino-1-(5-phospho-beta-D-ribosyl)imidazole-4-carboxamide site. One can recognise an ATP-grasp domain in the interval 121–328 (MRLLEYAGIP…IAHEIVNAVK (208 aa)). Residues 144 to 191 (PVIV…VPAY) and E213 contribute to the ATP site. N233 serves as a coordination point for 5-amino-1-(5-phospho-beta-D-ribosyl)imidazole-4-carboxamide. Residues E272 and E285 each coordinate Mg(2+).

It belongs to the phosphohexose mutase family. Mg(2+) is required as a cofactor. It depends on Mn(2+) as a cofactor.

It catalyses the reaction 5-amino-1-(5-phospho-beta-D-ribosyl)imidazole-4-carboxamide + formate + ATP = 5-formamido-1-(5-phospho-D-ribosyl)imidazole-4-carboxamide + ADP + phosphate. It participates in purine metabolism; IMP biosynthesis via de novo pathway; 5-formamido-1-(5-phospho-D-ribosyl)imidazole-4-carboxamide from 5-amino-1-(5-phospho-D-ribosyl)imidazole-4-carboxamide (formate route): step 1/1. Functionally, catalyzes the ATP- and formate-dependent formylation of 5-aminoimidazole-4-carboxamide-1-beta-d-ribofuranosyl 5'-monophosphate (AICAR) to 5-formaminoimidazole-4-carboxamide-1-beta-d-ribofuranosyl 5'-monophosphate (FAICAR) in the absence of folates. This Caldivirga maquilingensis (strain ATCC 700844 / DSM 13496 / JCM 10307 / IC-167) protein is 5-formaminoimidazole-4-carboxamide-1-(beta)-D-ribofuranosyl 5'-monophosphate synthetase.